Consider the following 2211-residue polypeptide: Nonribosomal peptide synthetase 13 (2211 aa).

An adenylation 1 region spans residues 76–475 (TYAELDSLSD…IEHHLQLTLP (400 aa)). Positions 594-671 (PPSTPKEATI…EQSKRAGLIQ (78 aa)) constitute a Carrier 1 domain. Serine 631 bears the O-(pantetheine 4'-phosphoryl)serine mark. The condensation 1 stretch occupies residues 710–975 (EDIYPCTALQ…IATVPTRIRV (266 aa)). Residues 1169–1563 (TYRELWAHSS…LGAVEASVMR (395 aa)) form an adenylation 2 region. Residues 1677–1756 (PMSDDNERRL…RSRHLITEQA (80 aa)) enclose the Carrier 2 domain. The residue at position 1714 (serine 1714) is an O-(pantetheine 4'-phosphoryl)serine. The condensation 2 stretch occupies residues 1814-2069 (HFQFDLSGAV…CTNYIPYRLS (256 aa)).

It belongs to the NRP synthetase family.

It catalyses the reaction L-proline + L-tryptophan + 2 ATP = brevianamide F + 2 AMP + 2 diphosphate + 2 H(+). It participates in mycotoxin biosynthesis. Its function is as follows. Nonribosomal peptide synthetase; part of the gene cluster that mediates the biosynthesis of fumitremorgins, indole alkaloids that carry not only intriguing chemical structures, but also interesting biological and pharmacological activities. The biosynthesis of fumitremorgin-type alkaloids begins by condensation of the two amino acids L-tryptophan and L-proline to brevianamide F, catalyzed by the non-ribosomal peptide synthetase ftmA. Brevianamide F is then prenylated by the prenyltransferase ftmPT1/ftmB in the presence of dimethylallyl diphosphate, resulting in the formation of tryprostatin B. The three cytochrome P450 monooxygenases, ftmP450-1/ftmC, ftmP450-2/ftmE and ftmP450-3/FtmG, are responsible for the conversion of tryprostatin B to 6-hydroxytryprostatin B, tryprostatin A to fumitremorgin C and fumitremorgin C to 12,13-dihydroxyfumitremorgin C, respectively. The putative methyltransferase ftmMT/ftmD is expected for the conversion of 6-hydroxytryprostatin B to tryprostatin A. FtmPT2/FtmH catalyzes the prenylation of 12,13-dihydroxyfumitre-morgin C in the presence of dimethylallyl diphosphate, resulting in the formation of fumitremorgin B. Fumitremorgin B is further converted to verruculogen by ftmOx1/ftmF via the insertion of an endoperoxide bond between the two prenyl moieties. In some fungal species, verruculogen is further converted to fumitremorgin A, but the enzymes involved in this step have not been identified yet. This chain is Nonribosomal peptide synthetase 13, found in Aspergillus fumigatus (strain ATCC MYA-4609 / CBS 101355 / FGSC A1100 / Af293) (Neosartorya fumigata).